The chain runs to 347 residues: Quinolinate synthase (347 aa).

Positions 47 and 68 each coordinate iminosuccinate. Cys-113 lines the [4Fe-4S] cluster pocket. Iminosuccinate is bound by residues 139–141 (YAN) and Ser-156. Cys-200 serves as a coordination point for [4Fe-4S] cluster. Iminosuccinate is bound by residues 226 to 228 (HPE) and Thr-243. Cys-297 serves as a coordination point for [4Fe-4S] cluster.

It belongs to the quinolinate synthase family. Type 1 subfamily. [4Fe-4S] cluster is required as a cofactor.

Its subcellular location is the cytoplasm. The catalysed reaction is iminosuccinate + dihydroxyacetone phosphate = quinolinate + phosphate + 2 H2O + H(+). Its pathway is cofactor biosynthesis; NAD(+) biosynthesis; quinolinate from iminoaspartate: step 1/1. Catalyzes the condensation of iminoaspartate with dihydroxyacetone phosphate to form quinolinate. The sequence is that of Quinolinate synthase from Escherichia coli O139:H28 (strain E24377A / ETEC).